The following is a 186-amino-acid chain: Putative manganese efflux pump MntP (186 aa).

A run of 6 helical transmembrane segments spans residues 1-21, 41-61, 62-82, 105-127, 139-159, and 163-183; these read MSFLTNFLLGLGLAMDAFAVS, VFFGGFQALMPVLGWVGGSAV, SGFVSDYAPWIAFGLLAFIGG, LFLLAVATSIDALAVGISFAFLG, CVTFVMSFCGAVLGYRIGHFF, and VEILGGLILIGLGVKILAEHM.

This sequence belongs to the MntP (TC 9.B.29) family.

The protein resides in the cell membrane. Probably functions as a manganese efflux pump. This is Putative manganese efflux pump MntP from Methanosarcina mazei (strain ATCC BAA-159 / DSM 3647 / Goe1 / Go1 / JCM 11833 / OCM 88) (Methanosarcina frisia).